We begin with the raw amino-acid sequence, 298 residues long: Lysozyme-like protein 1 (298 aa).

The signal sequence occupies residues 1–16; that stretch reads MLKLAFVTFLFALASA. The 219-residue stretch at 59–277 folds into the Ch-type lysozyme domain; it reads YAYAVDISVP…AAASSKNTDF (219 aa).

This sequence belongs to the glycosyl hydrolase 25 family. Expressed in intestine, IL2 and IL6 neurons and some neurons in the head ganglia.

It is found in the cytoplasmic vesicle lumen. Functionally, involved in resistance to Gram-negative bacterium S.marcescens and to bacterium Gram-positive S.aureus infection. In Caenorhabditis elegans, this protein is Lysozyme-like protein 1.